A 2843-amino-acid chain; its full sequence is Adenomatous polyposis coli protein (2843 aa).

At Ala2 the chain carries N-acetylalanine. A coiled-coil region spans residues 2–61 (AAASYDQLLKQVEALKMENSNLRQELEDNSNHLTKLETEASNMKEVLKQLQGSIEDEAMA). Phosphoserine occurs at positions 107 and 111. A coiled-coil region spans residues 127-248 (SRESTGYLEE…ATEAERSSQN (122 aa)). Residues 239–305 (ATEAERSSQN…STHSAPRRLT (67 aa)) form a disordered region. Residues 241 to 261 (EAERSSQNKHETGSHDAERQN) are compositionally biased toward basic and acidic residues. A compositionally biased stretch (polar residues) spans 271–282 (MATSGNGQGSTT). The segment covering 290 to 299 (SVLSSSSTHS) has biased composition (low complexity). ARM repeat units follow at residues 453 to 495 (LMKL…HYSI), 505 to 547 (LTNL…IASV), 548 to 591 (LRNL…VLSA), 592 to 638 (LWNL…GGGI), 639 to 683 (LRNV…ACGT), 684 to 725 (LWNL…SAAA), and 726 to 767 (LRNL…LDAQ). 3 positions are modified to phosphoserine: Ser744, Ser748, and Ser780. The tract at residues 828-878 (TTVLPSSSSSRGSLDSSRSEKDRSLERERGIGLGNYHPATENPGTSSKRGL) is disordered. A compositionally biased stretch (low complexity) spans 833–843 (SSSSSRGSLDS). Positions 844–857 (SRSEKDRSLERERG) are enriched in basic and acidic residues. Over residues 869-878 (NPGTSSKRGL) the composition is skewed to polar residues. Ser908 carries the phosphoserine modification. 2 disordered regions span residues 923 to 943 (RRSS…SENS) and 958 to 987 (RSSN…ESYS). Residues 927 to 943 (AAHTHSNTYNFTKSENS) are compositionally biased toward polar residues. Residues 960–1337 (SNDSLNSVSS…QHPRTKSSRL (378 aa)) are responsible for down-regulation through a process mediated by direct ubiquitination. Residues 961-971 (NDSLNSVSSSD) show a composition bias toward low complexity. Ser987, Ser1038, and Ser1042 each carry phosphoserine. Residues 1020-1169 (ELDTPINYSL…TNYSIKYNEE (150 aa)) are interaction with catenins. 3 disordered regions span residues 1099 to 1169 (VSPY…YNEE), 1190 to 1244 (SQKQ…GQPQ), and 1311 to 1376 (IGTR…PEHY). A compositionally biased stretch (polar residues) spans 1107–1130 (ANGSETNRVGSNHGINQNVSQSLC). The span at 1146–1159 (RYSEEEQHEEEERP) shows a compositional bias: basic and acidic residues. Residues 1190-1224 (SQKQSFSFSKSSSGQSSKTEHMSSSSENTSTPSSN) show a composition bias toward low complexity. Polar residues predominate over residues 1225–1244 (AKRQNQLHPSSAQSRSGQPQ). 2 stretches are compositionally biased toward low complexity: residues 1335–1345 (SRLQGSSLSSE) and 1355–1366 (SSGAKSPSKSGA). Residues Ser1360, Ser1371, Ser1385, Ser1392, and Ser1395 each carry the phosphoserine modification. 5 disordered regions span residues 1403-1475 (SSVQ…VNAA), 1526-1569 (PPVQ…DSDD), 1583-1611 (MPTK…KPSQ), 1664-1717 (SPPN…DDNK), and 1729-1836 (NSAM…RVRG). Thr1438 bears the Phosphothreonine mark. Composition is skewed to basic and acidic residues over residues 1448–1466 (TKRE…RESG) and 1540–1564 (EQPK…KDLL). Ser1567 bears the Phosphoserine mark. The span at 1683–1698 (EFEKRDTIPTEGRSTD) shows a compositional bias: basic and acidic residues. Residues 1735-1744 (GKSHKPFRVK) show a composition bias toward basic residues. Residue Ser1774 is modified to Phosphoserine. Composition is skewed to basic and acidic residues over residues 1785–1794 (YRTRVRKNAD) and 1804–1813 (VFSDNKDSKK). 3 positions are modified to phosphoserine: Ser1861, Ser1863, and Ser1864. Residues 1866–1893 (DFDDDDVDLSREKAELRKAKENKESEAK) form a highly charged region. Residues 1881 to 1896 (LRKAKENKESEAKVTS) show a composition bias toward basic and acidic residues. 3 disordered regions span residues 1881-1950 (LRKA…TDEK), 1965-2011 (HNSS…APKS), and 2043-2072 (ISSA…GGIL). Composition is skewed to polar residues over residues 1897–1913 (HTEL…TQAI) and 1928–1938 (QKQSTFPQSSK). The segment covering 1939–1950 (DIPDRGAATDEK) has biased composition (basic and acidic residues). A phosphoserine mark is found at Ser1971 and Ser1973. Residues 1979–1991 (NNNKENEPIKETE) show a composition bias toward basic and acidic residues. Positions 2035 to 2059 (EDDLLQECISSAMPKKKKPSRLKGD) are interaction with AXIN1. Ser2088, Ser2093, Ser2125, Ser2129, Ser2130, and Ser2132 each carry phosphoserine. Disordered regions lie at residues 2147 to 2635 (PFHL…SGAT) and 2667 to 2714 (NNPR…VPMR). Position 2151 is a phosphothreonine (Thr2151). The basic region stretch occupies residues 2167-2674 (ILKPGEKSTL…PINNPRSGRS (508 aa)). The span at 2169–2187 (KPGEKSTLETKKIESESKG) shows a compositional bias: basic and acidic residues. Polar residues-rich tracts occupy residues 2203–2223 (VRSN…NMPS) and 2257–2271 (ASKS…TTSP). Phosphoserine is present on residues Ser2260, Ser2270, and Ser2283. Residues 2286 to 2331 (ARQTSQIGGSSKAPSRSGSRDSTPSRPAQQPLSRPIQSPGRNSISP) are compositionally biased toward polar residues. Low complexity predominate over residues 2348-2369 (TSSPSTASTKSSGSGKMSYTSP). Polar residues-rich tracts occupy residues 2370 to 2409 (GRQM…NGNG) and 2418 to 2427 (RMSSTKSSGS). The segment covering 2459 to 2477 (SASFESLSPSSRPASPTRS) has biased composition (low complexity). Ser2473 and Ser2535 each carry phosphoserine. Residues 2475-2843 (TRSQAQTPVL…HSGSYLVTSV (369 aa)) are interaction with DLG1. The span at 2518–2535 (NDGRPAKRHDIARSHSES) shows a compositional bias: basic and acidic residues. Residues 2555 to 2568 (SSSLPRVSTWRRTG) show a composition bias toward polar residues. Ser2569 carries the phosphoserine modification. Residues 2569–2579 (SSSSILSASSE) are compositionally biased toward low complexity. The span at 2580–2592 (SSEKAKSEDEKHV) shows a compositional bias: basic and acidic residues. Composition is skewed to polar residues over residues 2593–2608 (NSIS…QVSA), 2620–2635 (FSPT…SGAT), and 2668–2679 (NPRSGRSPTGNT). 2 positions are modified to phosphoserine: Ser2671 and Ser2674. Residues 2674–2843 (SPTGNTPPVI…HSGSYLVTSV (170 aa)) form an interaction with MAPRE1 region. Position 2679 is a phosphothreonine (Thr2679). Phosphoserine occurs at positions 2710 and 2724. A disordered region spans residues 2729-2843 (DAPDQKGTEI…HSGSYLVTSV (115 aa)). Residues 2741–2757 (GQNNPVPVSETNESSIV) show a composition bias toward polar residues. The span at 2763-2774 (SSSSSSKHSSPS) shows a compositional bias: low complexity. Polar residues predominate over residues 2784-2812 (FNYNPSPRKSSADSTSARPSQIPTPVNNN). Position 2789 is a phosphoserine (Ser2789). A Microtubule tip localization signal motif is present at residues 2803-2806 (SQIP). The PDZ-binding signature appears at 2841–2843 (TSV).

Belongs to the adenomatous polyposis coli (APC) family. Forms homooligomers. Found in a complex consisting of ARHGEF4, APC and CTNNB1. Found in a complex composed of MACF1, APC, AXIN1, CTNNB1 and GSK3B. The complex composed, at least, of APC, CTNNB1 and GSK3B interacts with JPT1; the interaction requires the inactive form of GSK3B (phosphorylated at 'Ser-9'). Interacts with APC2. Interacts with DLG1 (via PDZ domains) and DLG3 (via PDZ domains). Interacts with alpha- and beta-catenins. Interacts with AXIN1 (via RGS domain). Interacts with ARHGEF4 (via N-terminus). Interacts (via C-terminal residues 2674-2843) with MAPRE1 (via C-terminal residues 206-211); the interaction inhibits association with and bundling of F-actin. Interacts with MAPRE2 and MAPRE3 (via C-terminus). Interacts with DIAPH1; DIAPH1 acts as a scaffold protein for MAPRE1 and APC to stabilize microtubules and promote cell migration. Interacts with DIAPH2. Interacts with SCRIB; may mediate APC targeting to adherens junctions of epithelial cells. Interacts with SPATA13 (via N-terminus and SH3 domain). Interacts with ASAP1 (via SH3 domain). Interacts (at the cell membrane) with AMER1 and AMER2 (via ARM repeats). Interacts with KHDRBS1. Interacts with actin; binds both to F-actin and actin filament bundles. Phosphorylated; phosphorylation enhances the F-actin bundling activity. Phosphorylated by GSK3B. Post-translationally, ubiquitinated, leading to its degradation by the proteasome. Ubiquitination is facilitated by Axin. Deubiquitinated by ZRANB1/TRABID. As to expression, expressed in a variety of tissues: brain, small intestine, colon, thymus, skeletal muscle, heart, prostate, lung, spleen, ovary, testis kidney, placenta, blood and liver. Isoform 1A: Very strongly expressed in brain but has relatively low expression levels in other tissues. Isoform 1B: Predominant form in all tissues except for brain, including gastric mucosa and blood.

The protein resides in the cell junction. It localises to the adherens junction. It is found in the cytoplasm. Its subcellular location is the cytoskeleton. The protein localises to the cell projection. The protein resides in the lamellipodium. It localises to the ruffle membrane. It is found in the cell membrane. Tumor suppressor. Promotes rapid degradation of CTNNB1 and participates in Wnt signaling as a negative regulator. APC activity is correlated with its phosphorylation state. Activates the GEF activity of SPATA13 and ARHGEF4. Plays a role in hepatocyte growth factor (HGF)-induced cell migration. Required for MMP9 up-regulation via the JNK signaling pathway in colorectal tumor cells. Associates with both microtubules and actin filaments, components of the cytoskeleton. Plays a role in mediating the organization of F-actin into ordered bundles. Functions downstream of Rho GTPases and DIAPH1 to selectively stabilize microtubules. Acts as a mediator of ERBB2-dependent stabilization of microtubules at the cell cortex. It is required for the localization of MACF1 to the cell membrane and this localization of MACF1 is critical for its function in microtubule stabilization. The polypeptide is Adenomatous polyposis coli protein (Homo sapiens (Human)).